The chain runs to 323 residues: MSGKPPAIFLMGPTAAGKTDLAIELTTVLPCELISVDSALVYRGMDIGSAKPSKEVLAAHPHRLIDIRDPAQSYSAAQFRTDALEAMAEITARGKIPLLVGGTMLYYKALIDGLADMPAADATVRAELEAQAEALGLAELHRQLAEVDPESAARIHPNDPQRLIRALEVYRVSGESMTAHRRRQFAESRGADAGAGGHLPYTVASLAIAPTDRHILHQRIALRFSQMLEQGFVDEVRSLRARSDLHAGLPSIRAVGYRQVWDYLDGKLTENEMRERGIIATRQLAKRQFTWLRGWPDVHWLDSLACDNLSRTLKYLGAISILS.

ATP is bound at residue 12–19 (GPTAAGKT). A substrate-binding site is contributed by 14–19 (TAAGKT). Interaction with substrate tRNA regions lie at residues 37 to 40 (DSAL) and 161 to 165 (QRLIR).

This sequence belongs to the IPP transferase family. In terms of assembly, monomer. The cofactor is Mg(2+).

It catalyses the reaction adenosine(37) in tRNA + dimethylallyl diphosphate = N(6)-dimethylallyladenosine(37) in tRNA + diphosphate. Its function is as follows. Catalyzes the transfer of a dimethylallyl group onto the adenine at position 37 in tRNAs that read codons beginning with uridine, leading to the formation of N6-(dimethylallyl)adenosine (i(6)A). In Pseudomonas putida (strain ATCC 700007 / DSM 6899 / JCM 31910 / BCRC 17059 / LMG 24140 / F1), this protein is tRNA dimethylallyltransferase.